The sequence spans 115 residues: NADH-ubiquinone oxidoreductase chain 3 (115 aa).

The next 3 helical transmembrane spans lie at 3-23 (LILT…IAFW), 55-75 (FFLV…LLPL), and 86-106 (TMLT…AYEW).

Belongs to the complex I subunit 3 family. As to quaternary structure, core subunit of respiratory chain NADH dehydrogenase (Complex I) which is composed of 45 different subunits. Interacts with TMEM186. Interacts with TMEM242.

It is found in the mitochondrion inner membrane. It carries out the reaction a ubiquinone + NADH + 5 H(+)(in) = a ubiquinol + NAD(+) + 4 H(+)(out). Core subunit of the mitochondrial membrane respiratory chain NADH dehydrogenase (Complex I) which catalyzes electron transfer from NADH through the respiratory chain, using ubiquinone as an electron acceptor. Essential for the catalytic activity of complex I. This is NADH-ubiquinone oxidoreductase chain 3 from Rhinoceros unicornis (Greater Indian rhinoceros).